Here is a 370-residue protein sequence, read N- to C-terminus: GDSL esterase/lipase At1g09390 (370 aa).

A signal peptide spans 1–27 (MATLSLHSHSFLLVLLPFILILRQNLA). S44 serves as the catalytic Nucleophile. N90 and N315 each carry an N-linked (GlcNAc...) asparagine glycan. Residues D336 and H339 contribute to the active site.

Belongs to the 'GDSL' lipolytic enzyme family.

It localises to the secreted. The protein is GDSL esterase/lipase At1g09390 of Arabidopsis thaliana (Mouse-ear cress).